The following is a 734-amino-acid chain: Regulator of G-protein signaling rgs-6 (734 aa).

Positions 1–24 (MSTPCSGNEPATPTNTSPNNETSN) are disordered. Residues 8 to 24 (NEPATPTNTSPNNETSN) are compositionally biased toward low complexity. The region spanning 46 to 157 (IFKKVIRDPV…YDCWPRFLRS (112 aa)) is the RGS domain. Disordered stretches follow at residues 162–236 (QPSF…SPTH), 489–515 (HAVSKSDPNPSAGTSQDRMASGVYSPA), and 538–734 (VNAG…AAYV). Acidic residues predominate over residues 166-176 (TDEELAADDED). Residues 180–191 (HSQPTSLNNTNE) show a composition bias toward polar residues. Over residues 194-208 (AAAQQSQPAPNAPAA) the composition is skewed to low complexity. Polar residues-rich tracts occupy residues 494–506 (SDPNPSAGTSQDR) and 538–557 (VNAGSASTSSNNVSEPSKNR). Basic and acidic residues-rich tracts occupy residues 563-585 (SKTEKKVVKPESEKEKLKPRSDD) and 606-619 (TTEEPLKRMGKSGD). Residues 642–694 (AAAAAAGASPSTSAPSTSTSVQTKTTTSPTKSPTSTTITTSGTTTSATSSVAT) show a composition bias toward low complexity. 2 stretches are compositionally biased toward polar residues: residues 705–715 (SASTPATSSQL) and 724–734 (RESSWQTAAYV).

This Caenorhabditis elegans protein is Regulator of G-protein signaling rgs-6.